Consider the following 312-residue polypeptide: Ribosomal RNA small subunit methyltransferase H (312 aa).

Residues 33 to 35 (GGH), Asp-53, Phe-80, Asp-102, and Gln-109 contribute to the S-adenosyl-L-methionine site.

The protein belongs to the methyltransferase superfamily. RsmH family.

Its subcellular location is the cytoplasm. The enzyme catalyses cytidine(1402) in 16S rRNA + S-adenosyl-L-methionine = N(4)-methylcytidine(1402) in 16S rRNA + S-adenosyl-L-homocysteine + H(+). In terms of biological role, specifically methylates the N4 position of cytidine in position 1402 (C1402) of 16S rRNA. The sequence is that of Ribosomal RNA small subunit methyltransferase H from Heliobacterium mobile (Heliobacillus mobilis).